The sequence spans 120 residues: uncharacterized protein (120 aa).

Residues 8-28 traverse the membrane as a helical segment; sequence LIVKWFVGLMLIMMMVAVSLF.

It localises to the membrane. This is an uncharacterized protein from Bacillus anthracis.